We begin with the raw amino-acid sequence, 1550 residues long: Protein TIME FOR COFFEE (1550 aa).

Disordered stretches follow at residues 1 to 191, 207 to 304, 325 to 505, 708 to 736, 779 to 805, 859 to 1023, 1086 to 1130, 1163 to 1196, 1213 to 1296, and 1321 to 1435; these read MDRN…PVSP, VPRK…PVAV, TSKQ…SERG, QGSVLGRSSNPVQDKNSQSTSKSSETAQR, RPPNSGITSSGPTATSTSMNGSASATP, FNGS…KAGV, ASLE…QSIA, ALPQSSGSLPTSHHQQLLQQQQQQHMQRSQSQQP, AASA…SVAA, and NSKP…PKHG. A compositionally biased stretch (basic and acidic residues) spans 43–80; it reads EAARLRDRGGSNKKDRDRERDRDRERERERDRERDRLN. Residues 100–118 are compositionally biased toward acidic residues; that stretch reads DGGDDSSEESVNDDEEYDD. Over residues 134 to 151 the composition is skewed to low complexity; sequence SNNISAASFSSSLSNHHN. Residues 157–171 are compositionally biased toward basic residues; that stretch reads LHHHHHSHNNNHQRK. Positions 241–250 are enriched in polar residues; sequence RQISSTSPAN. The span at 292-301 shows a compositional bias: low complexity; it reads KSSSSKLSSP. Polar residues predominate over residues 348-366; it reads RVSSPISNPQTLPQSSITL. The span at 367–379 shows a compositional bias: low complexity; that stretch reads AANSSSSNVSAIA. Residues 409 to 432 show a composition bias toward polar residues; the sequence is SKSQVPFSNQLKSSGSGEGNSSVL. 2 stretches are compositionally biased toward basic and acidic residues: residues 447 to 461 and 473 to 490; these read DSEKKENNLSKDETI and SDGEGAKSSSPEKEKFEI. Polar residues-rich tracts occupy residues 713–736, 783–803, and 884–992; these read GRSSNPVQDKNSQSTSKSSETAQR, SGITSSGPTATSTSMNGSASA, and LTGQ…NLGL. Positions 1112–1126 are enriched in gly residues; it reads SGGGAIGKTSGGNGG. Residues 1164–1173 are compositionally biased toward polar residues; the sequence is LPQSSGSLPT. The span at 1174-1195 shows a compositional bias: low complexity; sequence SHHQQLLQQQQQQHMQRSQSQQ. Over residues 1234–1253 the composition is skewed to polar residues; the sequence is NMTTSPAGTTKFANANSGFP. Low complexity predominate over residues 1254-1273; it reads QNLVQSSSNQVQSQQWKNNS. 3 stretches are compositionally biased toward polar residues: residues 1274–1296, 1321–1342, and 1351–1360; these read PRTTNTTQAQSPSMLSPSTSVAA, NSKPMTSGSPMQQVQGGTNHQA, and SPSTSSVSKN. Residues 1361-1382 show a composition bias toward low complexity; the sequence is ASGSPRTTASASSAANKGGQAS. Polar residues-rich tracts occupy residues 1383–1397 and 1405–1419; these read TTTHSASQPSKNLQP and GGRNNGPSVLGNPTT. Residues 1420-1435 show a composition bias toward low complexity; the sequence is SSGSKSQQQQQLPKHG.

Interacts with MYC2.

The protein localises to the nucleus. Functionally, regulator of normal clock function. Acts in the mid to late night. Contributes to the amplitude of circadian clocks. May act on the transcriptional induction of LATE ELONGATED HYPOCOTYL (LHY). Inhibits MYC2 protein accumulation, acting as a negative factor in the JA-signaling pathway. The protein is Protein TIME FOR COFFEE (TIC) of Arabidopsis thaliana (Mouse-ear cress).